The chain runs to 128 residues: Small ribosomal subunit protein uS11 (128 aa).

This sequence belongs to the universal ribosomal protein uS11 family. Part of the 30S ribosomal subunit. Interacts with proteins S7 and S18. Binds to IF-3.

Located on the platform of the 30S subunit, it bridges several disparate RNA helices of the 16S rRNA. Forms part of the Shine-Dalgarno cleft in the 70S ribosome. In Acinetobacter baylyi (strain ATCC 33305 / BD413 / ADP1), this protein is Small ribosomal subunit protein uS11.